The primary structure comprises 354 residues: S-adenosylmethionine:tRNA ribosyltransferase-isomerase (354 aa).

The protein belongs to the QueA family. Monomer.

It is found in the cytoplasm. The enzyme catalyses 7-aminomethyl-7-carbaguanosine(34) in tRNA + S-adenosyl-L-methionine = epoxyqueuosine(34) in tRNA + adenine + L-methionine + 2 H(+). It participates in tRNA modification; tRNA-queuosine biosynthesis. Transfers and isomerizes the ribose moiety from AdoMet to the 7-aminomethyl group of 7-deazaguanine (preQ1-tRNA) to give epoxyqueuosine (oQ-tRNA). The chain is S-adenosylmethionine:tRNA ribosyltransferase-isomerase from Salmonella paratyphi C (strain RKS4594).